Here is a 236-residue protein sequence, read N- to C-terminus: Uridylate kinase (236 aa).

10-13 lines the ATP pocket; the sequence is KLSG. Residue Gly-52 participates in UMP binding. ATP contacts are provided by Gly-53 and Arg-57. UMP-binding positions include Asp-72 and 133–140; that span reads TGNPFFTT. ATP contacts are provided by Thr-160, Tyr-166, and Asp-169.

This sequence belongs to the UMP kinase family. Homohexamer.

Its subcellular location is the cytoplasm. It carries out the reaction UMP + ATP = UDP + ADP. The protein operates within pyrimidine metabolism; CTP biosynthesis via de novo pathway; UDP from UMP (UMPK route): step 1/1. With respect to regulation, inhibited by UTP. In terms of biological role, catalyzes the reversible phosphorylation of UMP to UDP. The sequence is that of Uridylate kinase from Ralstonia nicotianae (strain ATCC BAA-1114 / GMI1000) (Ralstonia solanacearum).